The following is a 54-amino-acid chain: Putative ATP synthase subunit epsilon, mitochondrial (54 aa).

Belongs to the eukaryotic ATPase epsilon family. As to quaternary structure, F-type ATPases have 2 components, CF(1) - the catalytic core - and CF(0) - the membrane proton channel. CF(1) has five subunits: alpha(3), beta(3), gamma(1), delta(1), epsilon(1). CF(0) seems to have nine subunits: a, b, c, d, e, f, g, F6 and 8 (or A6L).

The protein localises to the mitochondrion. Its subcellular location is the mitochondrion inner membrane. Mitochondrial membrane ATP synthase (F(1)F(0) ATP synthase or Complex V) produces ATP from ADP in the presence of a proton gradient across the membrane which is generated by electron transport complexes of the respiratory chain. F-type ATPases consist of two structural domains, F(1) - containing the extramembraneous catalytic core, and F(0) - containing the membrane proton channel, linked together by a central stalk and a peripheral stalk. During catalysis, ATP synthesis in the catalytic domain of F(1) is coupled via a rotary mechanism of the central stalk subunits to proton translocation. Part of the complex F(1) domain and of the central stalk which is part of the complex rotary element. Rotation of the central stalk against the surrounding alpha(3)beta(3) subunits leads to hydrolysis of ATP in three separate catalytic sites on the beta subunits. The protein is Putative ATP synthase subunit epsilon, mitochondrial of Caenorhabditis elegans.